A 498-amino-acid polypeptide reads, in one-letter code: ATP synthase subunit beta, chloroplastic (498 aa).

172 to 179 is a binding site for ATP; that stretch reads GGAGVGKT.

Belongs to the ATPase alpha/beta chains family. In terms of assembly, F-type ATPases have 2 components, CF(1) - the catalytic core - and CF(0) - the membrane proton channel. CF(1) has five subunits: alpha(3), beta(3), gamma(1), delta(1), epsilon(1). CF(0) has four main subunits: a(1), b(1), b'(1) and c(9-12).

The protein localises to the plastid. It is found in the chloroplast thylakoid membrane. It catalyses the reaction ATP + H2O + 4 H(+)(in) = ADP + phosphate + 5 H(+)(out). Its function is as follows. Produces ATP from ADP in the presence of a proton gradient across the membrane. The catalytic sites are hosted primarily by the beta subunits. This is ATP synthase subunit beta, chloroplastic from Drimys granadensis.